The sequence spans 836 residues: Tuftelin-interacting protein 11 (836 aa).

Basic and acidic residues predominate over residues 1 to 13 (MSLSHLYRDGEGH). Disordered stretches follow at residues 1–31 (MSLS…DWDL), 54–73 (WAER…RARD), and 85–136 (LKKG…AGGT). The segment at 1–50 (MSLSHLYRDGEGHMDDDEDERENFEITDWDLQNEFNPNRQRHWQTKEEAT) is required for interaction with DHX15. The residue at position 2 (S2) is a Phosphoserine. Positions 14-28 (MDDDEDERENFEITD) are enriched in acidic residues. Basic and acidic residues predominate over residues 54 to 64 (WAERDSDEERP). S59 and S98 each carry phosphoserine. The segment covering 91-102 (EEAELEDSDDEE) has biased composition (acidic residues). Residues 103–116 (KPVKQDEFPKDFGP) are compositionally biased toward basic and acidic residues. Phosphoserine is present on S144. In terms of domain architecture, G-patch spans 149 to 195 (TKGIGQKLLQKMGYVPGRGLGKNAQGIINPIEAKQRKGKGAVGAYGS). The disordered stretch occupies residues 183–236 (QRKGKGAVGAYGSERTTQSLQDFPVVDSEEEAEEEFQKELSQWRKDPSGSKKKP). Residue S210 is modified to Phosphoserine. Positions 217 to 231 (EFQKELSQWRKDPSG) are enriched in basic and acidic residues. The Nuclear localization signal signature appears at 699–704 (VKDKFN). Positions 709–733 (IMNRAVSSNVGAYMQPGARENIAYL) are required for nuclear speckle localization.

This sequence belongs to the TFP11/STIP family. Identified in the spliceosome C complex. Found in the Intron Large (IL) complex, a post-mRNA release spliceosomal complex containing the excised intron, U2, U5 and U6 snRNPs, and splicing factors. Interacts with TUFT1. Interacts with DHX15; indicative for a recruitment of DHX15 to the IL complex. Interacts with GCFC2.

The protein localises to the cytoplasm. It is found in the nucleus. Functionally, involved in pre-mRNA splicing, specifically in spliceosome disassembly during late-stage splicing events. Intron turnover seems to proceed through reactions in two lariat-intron associated complexes termed Intron Large (IL) and Intron Small (IS). In cooperation with DHX15 seems to mediate the transition of the U2, U5 and U6 snRNP-containing IL complex to the snRNP-free IS complex leading to efficient debranching and turnover of excised introns. May play a role in the differentiation of ameloblasts and odontoblasts or in the forming of the enamel extracellular matrix. In Sus scrofa (Pig), this protein is Tuftelin-interacting protein 11 (TFIP11).